A 223-amino-acid chain; its full sequence is Phosphoribosylformylglycinamidine synthase subunit PurQ (223 aa).

A Glutamine amidotransferase type-1 domain is found at 3 to 223 (FAVLVFPGSN…MVKSWREQHV (221 aa)). Cys85 acts as the Nucleophile in catalysis. Residues His193 and Glu195 contribute to the active site.

As to quaternary structure, part of the FGAM synthase complex composed of 1 PurL, 1 PurQ and 2 PurS subunits.

Its subcellular location is the cytoplasm. The enzyme catalyses N(2)-formyl-N(1)-(5-phospho-beta-D-ribosyl)glycinamide + L-glutamine + ATP + H2O = 2-formamido-N(1)-(5-O-phospho-beta-D-ribosyl)acetamidine + L-glutamate + ADP + phosphate + H(+). It carries out the reaction L-glutamine + H2O = L-glutamate + NH4(+). It participates in purine metabolism; IMP biosynthesis via de novo pathway; 5-amino-1-(5-phospho-D-ribosyl)imidazole from N(2)-formyl-N(1)-(5-phospho-D-ribosyl)glycinamide: step 1/2. In terms of biological role, part of the phosphoribosylformylglycinamidine synthase complex involved in the purines biosynthetic pathway. Catalyzes the ATP-dependent conversion of formylglycinamide ribonucleotide (FGAR) and glutamine to yield formylglycinamidine ribonucleotide (FGAM) and glutamate. The FGAM synthase complex is composed of three subunits. PurQ produces an ammonia molecule by converting glutamine to glutamate. PurL transfers the ammonia molecule to FGAR to form FGAM in an ATP-dependent manner. PurS interacts with PurQ and PurL and is thought to assist in the transfer of the ammonia molecule from PurQ to PurL. In Staphylococcus aureus (strain Mu50 / ATCC 700699), this protein is Phosphoribosylformylglycinamidine synthase subunit PurQ.